Consider the following 225-residue polypeptide: Ribulose-phosphate 3-epimerase (225 aa).

Position 10 (S10) interacts with substrate. 3 residues coordinate a divalent metal cation: H35, D37, and H68. The active-site Proton acceptor is D37. Residues H68, 144-147, and 175-177 contribute to the substrate site; these read GFGG and DGG. D175 serves as a coordination point for a divalent metal cation. D175 functions as the Proton donor in the catalytic mechanism.

This sequence belongs to the ribulose-phosphate 3-epimerase family. A divalent metal cation serves as cofactor.

The catalysed reaction is D-ribulose 5-phosphate = D-xylulose 5-phosphate. It participates in carbohydrate degradation. Catalyzes the reversible epimerization of D-ribulose 5-phosphate to D-xylulose 5-phosphate. The polypeptide is Ribulose-phosphate 3-epimerase (Rhodospirillum rubrum).